A 224-amino-acid polypeptide reads, in one-letter code: Na(+)-translocating NADH-quinone reductase subunit D (224 aa).

Helical transmembrane passes span 43–63, 67–87, 104–124, 132–152, and 179–199; these read TVMA…ISMI, IPSS…VIVV, VFVG…AFAM, FFDG…LGFV, and NGLL…IWAL.

Belongs to the NqrDE/RnfAE family. Composed of six subunits; NqrA, NqrB, NqrC, NqrD, NqrE and NqrF.

Its subcellular location is the cell inner membrane. The enzyme catalyses a ubiquinone + n Na(+)(in) + NADH + H(+) = a ubiquinol + n Na(+)(out) + NAD(+). NQR complex catalyzes the reduction of ubiquinone-1 to ubiquinol by two successive reactions, coupled with the transport of Na(+) ions from the cytoplasm to the periplasm. NqrA to NqrE are probably involved in the second step, the conversion of ubisemiquinone to ubiquinol. In Pseudomonas aeruginosa (strain LESB58), this protein is Na(+)-translocating NADH-quinone reductase subunit D.